The chain runs to 1176 residues: Pesticidal crystal protein Cry1Aa (1176 aa).

It belongs to the delta endotoxin family.

Its function is as follows. Promotes colloidosmotic lysis by binding to the midgut epithelial cells of many lepidopteran larvae. The protein is Pesticidal crystal protein Cry1Aa (cry1Aa) of Bacillus thuringiensis subsp. aizawai.